The chain runs to 687 residues: Polyphosphate kinase (687 aa).

An ATP-binding site is contributed by Asn45. Mg(2+) contacts are provided by Arg375 and Arg405. The active-site Phosphohistidine intermediate is His435. ATP-binding residues include Tyr472, Arg568, and His596.

It belongs to the polyphosphate kinase 1 (PPK1) family. Mg(2+) serves as cofactor. In terms of processing, an intermediate of this reaction is the autophosphorylated ppk in which a phosphate is covalently linked to a histidine residue through a N-P bond.

It carries out the reaction [phosphate](n) + ATP = [phosphate](n+1) + ADP. Its function is as follows. Catalyzes the reversible transfer of the terminal phosphate of ATP to form a long-chain polyphosphate (polyP). This Burkholderia multivorans (strain ATCC 17616 / 249) protein is Polyphosphate kinase.